The following is a 229-amino-acid chain: MSFEISVEEIDELIETGNLNIDYALKELGATSQPPPNRPLSQISKTEENNDETRTSKNSASAEAPAHASSPLRSHNEESEPGKQSSDGFSMISNRPQTGMLLMGSDTQSPSPSKTYQGLILDAKKRALNEPRRNQKTTNEHGNTNDTWIFKRGEYSHQERGLGYTESEIKNTIFIPRHRREHSISWVNGRTTISEWCNPCCAPVKSIASVEKCTCGRCPKICELCIRDP.

The segment at 28-115 is disordered; the sequence is LGATSQPPPN…DTQSPSPSKT (88 aa). Over residues 45–55 the composition is skewed to basic and acidic residues; the sequence is KTEENNDETRT. The span at 59-71 shows a compositional bias: low complexity; that stretch reads SASAEAPAHASSP. 2 stretches are compositionally biased toward polar residues: residues 82–97 and 105–115; these read GKQS…NRPQ and SDTQSPSPSKT. Histidine 178, cysteine 197, cysteine 201, cysteine 213, cysteine 215, cysteine 218, cysteine 222, and cysteine 225 together coordinate Zn(2+).

The protein belongs to the paramyxoviruses V protein family.

Its function is as follows. Blocks host interferon signaling. This is Non-structural protein V (P/V) from Human parainfluenza 4b virus (strain 68-333) (HPIV-4b).